Here is a 335-residue protein sequence, read N- to C-terminus: Fructose-1,6-bisphosphatase class 1 (335 aa).

Residues E90, D112, L114, and D115 each contribute to the Mg(2+) site. Substrate-binding positions include 115–118, N210, and K276; that span reads DGSS. E282 contacts Mg(2+).

Belongs to the FBPase class 1 family. In terms of assembly, homotetramer. The cofactor is Mg(2+).

The protein localises to the cytoplasm. It carries out the reaction beta-D-fructose 1,6-bisphosphate + H2O = beta-D-fructose 6-phosphate + phosphate. It functions in the pathway carbohydrate biosynthesis; gluconeogenesis. The protein is Fructose-1,6-bisphosphatase class 1 of Ectopseudomonas mendocina (strain ymp) (Pseudomonas mendocina).